A 185-amino-acid chain; its full sequence is Elongation factor P (185 aa).

It belongs to the elongation factor P family.

The protein resides in the cytoplasm. It functions in the pathway protein biosynthesis; polypeptide chain elongation. Functionally, involved in peptide bond synthesis. Stimulates efficient translation and peptide-bond synthesis on native or reconstituted 70S ribosomes in vitro. Probably functions indirectly by altering the affinity of the ribosome for aminoacyl-tRNA, thus increasing their reactivity as acceptors for peptidyl transferase. The protein is Elongation factor P of Nitratidesulfovibrio vulgaris (strain DSM 19637 / Miyazaki F) (Desulfovibrio vulgaris).